We begin with the raw amino-acid sequence, 440 residues long: Thymidine phosphorylase (440 aa).

This sequence belongs to the thymidine/pyrimidine-nucleoside phosphorylase family. Homodimer.

The enzyme catalyses thymidine + phosphate = 2-deoxy-alpha-D-ribose 1-phosphate + thymine. The protein operates within pyrimidine metabolism; dTMP biosynthesis via salvage pathway; dTMP from thymine: step 1/2. Functionally, the enzymes which catalyze the reversible phosphorolysis of pyrimidine nucleosides are involved in the degradation of these compounds and in their utilization as carbon and energy sources, or in the rescue of pyrimidine bases for nucleotide synthesis. This chain is Thymidine phosphorylase, found in Salmonella arizonae (strain ATCC BAA-731 / CDC346-86 / RSK2980).